The primary structure comprises 42 residues: Crotamine-IV-2 (42 aa).

3 cysteine pairs are disulfide-bonded: Cys4–Cys37, Cys11–Cys31, and Cys19–Cys38.

It belongs to the crotamine-myotoxin family. Monomer. In terms of tissue distribution, expressed by the venom gland.

The protein resides in the secreted. Cationic peptide that possesses multiple functions. It acts as a cell-penetrating peptide (CPP), and as a potent voltage-gated potassium channel (Kv) inhibitor. It exhibits antimicrobial activities, and hind limb paralysis. It also induces potent blockade of neuromuscular transmission in young chicken biventer cervicis preparation and potent myotoxic effect. In vivo, induces myonecrosis, upon intramuscular or subcutaneous injections into mice. The protein is Crotamine-IV-2 of Crotalus durissus cumanensis (South American rattlesnake).